The sequence spans 251 residues: Ubiquinone/menaquinone biosynthesis C-methyltransferase UbiE (251 aa).

S-adenosyl-L-methionine-binding positions include Thr74, Asp95, 123 to 124, and Ser140; that span reads NA.

Belongs to the class I-like SAM-binding methyltransferase superfamily. MenG/UbiE family.

The enzyme catalyses a 2-demethylmenaquinol + S-adenosyl-L-methionine = a menaquinol + S-adenosyl-L-homocysteine + H(+). It carries out the reaction a 2-methoxy-6-(all-trans-polyprenyl)benzene-1,4-diol + S-adenosyl-L-methionine = a 5-methoxy-2-methyl-3-(all-trans-polyprenyl)benzene-1,4-diol + S-adenosyl-L-homocysteine + H(+). Its pathway is quinol/quinone metabolism; menaquinone biosynthesis; menaquinol from 1,4-dihydroxy-2-naphthoate: step 2/2. The protein operates within cofactor biosynthesis; ubiquinone biosynthesis. In terms of biological role, methyltransferase required for the conversion of demethylmenaquinol (DMKH2) to menaquinol (MKH2) and the conversion of 2-polyprenyl-6-methoxy-1,4-benzoquinol (DDMQH2) to 2-polyprenyl-3-methyl-6-methoxy-1,4-benzoquinol (DMQH2). This is Ubiquinone/menaquinone biosynthesis C-methyltransferase UbiE from Serratia proteamaculans (strain 568).